Reading from the N-terminus, the 327-residue chain is DNA-directed RNA polymerase subunit alpha (327 aa).

Residues 1–233 form an alpha N-terminal domain (alpha-NTD) region; it reads MQNVLKSFLT…HQLAAFVDLK (233 aa). Residues 247 to 327 are alpha C-terminal domain (alpha-CTD); sequence VNPLLLRPVE…GWPPADLTDQ (81 aa).

It belongs to the RNA polymerase alpha chain family. In terms of assembly, homodimer. The RNAP catalytic core consists of 2 alpha, 1 beta, 1 beta' and 1 omega subunit. When a sigma factor is associated with the core the holoenzyme is formed, which can initiate transcription.

It catalyses the reaction RNA(n) + a ribonucleoside 5'-triphosphate = RNA(n+1) + diphosphate. DNA-dependent RNA polymerase catalyzes the transcription of DNA into RNA using the four ribonucleoside triphosphates as substrates. This is DNA-directed RNA polymerase subunit alpha from Coxiella burnetii (strain CbuK_Q154) (Coxiella burnetii (strain Q154)).